The chain runs to 473 residues: tRNA-2-methylthio-N(6)-dimethylallyladenosine synthase (473 aa).

Positions 5–125 constitute an MTTase N-terminal domain; it reads RKLHIKSFGC…LPQLLAEAAR (121 aa). Positions 14, 50, 88, 166, 170, and 173 each coordinate [4Fe-4S] cluster. Residues 152–384 enclose the Radical SAM core domain; it reads RARGISAFVT…QELIDSQQAA (233 aa). A TRAM domain is found at 387–449; that stretch reads AAVIGTTVEV…RYSLIGELAA (63 aa). The segment at 452–473 is disordered; that stretch reads QHSGFATRSEDSPQSLPITTGA.

This sequence belongs to the methylthiotransferase family. MiaB subfamily. Monomer. [4Fe-4S] cluster is required as a cofactor.

It is found in the cytoplasm. The catalysed reaction is N(6)-dimethylallyladenosine(37) in tRNA + (sulfur carrier)-SH + AH2 + 2 S-adenosyl-L-methionine = 2-methylsulfanyl-N(6)-dimethylallyladenosine(37) in tRNA + (sulfur carrier)-H + 5'-deoxyadenosine + L-methionine + A + S-adenosyl-L-homocysteine + 2 H(+). Functionally, catalyzes the methylthiolation of N6-(dimethylallyl)adenosine (i(6)A), leading to the formation of 2-methylthio-N6-(dimethylallyl)adenosine (ms(2)i(6)A) at position 37 in tRNAs that read codons beginning with uridine. The protein is tRNA-2-methylthio-N(6)-dimethylallyladenosine synthase of Rhodopseudomonas palustris (strain BisB18).